A 288-amino-acid polypeptide reads, in one-letter code: UDP-3-O-acyl-N-acetylglucosamine deacetylase (288 aa).

Residues His-79, His-236, and Asp-240 each contribute to the Zn(2+) site. His-263 (proton donor) is an active-site residue.

The protein belongs to the LpxC family. It depends on Zn(2+) as a cofactor.

The enzyme catalyses a UDP-3-O-[(3R)-3-hydroxyacyl]-N-acetyl-alpha-D-glucosamine + H2O = a UDP-3-O-[(3R)-3-hydroxyacyl]-alpha-D-glucosamine + acetate. It participates in glycolipid biosynthesis; lipid IV(A) biosynthesis; lipid IV(A) from (3R)-3-hydroxytetradecanoyl-[acyl-carrier-protein] and UDP-N-acetyl-alpha-D-glucosamine: step 2/6. Its function is as follows. Catalyzes the hydrolysis of UDP-3-O-myristoyl-N-acetylglucosamine to form UDP-3-O-myristoylglucosamine and acetate, the committed step in lipid A biosynthesis. The protein is UDP-3-O-acyl-N-acetylglucosamine deacetylase of Rickettsia bellii (strain OSU 85-389).